Here is a 72-residue protein sequence, read N- to C-terminus: MAKEELLEFPGVVKELLPNATFRVELENGHEIIAHTAGKMRKNRIRVLAGDKVQVEMTPYDLTKGRINYRFK.

Residues Met1–Lys72 enclose the S1-like domain.

This sequence belongs to the IF-1 family. In terms of assembly, component of the 30S ribosomal translation pre-initiation complex which assembles on the 30S ribosome in the order IF-2 and IF-3, IF-1 and N-formylmethionyl-tRNA(fMet); mRNA recruitment can occur at any time during PIC assembly.

It localises to the cytoplasm. One of the essential components for the initiation of protein synthesis. Stabilizes the binding of IF-2 and IF-3 on the 30S subunit to which N-formylmethionyl-tRNA(fMet) subsequently binds. Helps modulate mRNA selection, yielding the 30S pre-initiation complex (PIC). Upon addition of the 50S ribosomal subunit IF-1, IF-2 and IF-3 are released leaving the mature 70S translation initiation complex. The protein is Translation initiation factor IF-1 of Dinoroseobacter shibae (strain DSM 16493 / NCIMB 14021 / DFL 12).